Reading from the N-terminus, the 257-residue chain is Short chain dehydrogenase ausX (257 aa).

NADP(+) contacts are provided by isoleucine 11, aspartate 57, arginine 119, tyrosine 151, lysine 155, and valine 184. The active-site Proton acceptor is the tyrosine 151. The Lowers pKa of active site Tyr role is filled by lysine 155.

This sequence belongs to the short-chain dehydrogenases/reductases (SDR) family.

It participates in secondary metabolite biosynthesis; terpenoid biosynthesis. Functionally, short chain dehydrogenase; part of the gene cluster that mediates the biosynthesis of calidodehydroaustin, a fungal meroterpenoid. The first step of the pathway is the synthesis of 3,5-dimethylorsellinic acid by the polyketide synthase ausA. 3,5-dimethylorsellinic acid is then prenylated by the polyprenyl transferase ausN. Further epoxidation by the FAD-dependent monooxygenase ausM and cyclization by the probable terpene cyclase ausL lead to the formation of protoaustinoid A. Protoaustinoid A is then oxidized to spiro-lactone preaustinoid A3 by the combined action of the FAD-binding monooxygenases ausB and ausC, and the dioxygenase ausE. Acid-catalyzed keto-rearrangement and ring contraction of the tetraketide portion of preaustinoid A3 by ausJ lead to the formation of preaustinoid A4. The aldo-keto reductase ausK, with the help of ausH, is involved in the next step by transforming preaustinoid A4 into isoaustinone which is in turn hydroxylated by the P450 monooxygenase ausI to form austinolide. The cytochrome P450 monooxygenase ausG modifies austinolide to austinol. Austinol is further acetylated to austin by the O-acetyltransferase ausP, which spontaneously changes to dehydroaustin. The cytochrome P450 monooxygenase ausR then converts dehydroaustin is into 7-dehydrodehydroaustin. The hydroxylation catalyzed by ausR permits the O-acetyltransferase ausQ to add an additional acetyl group to the molecule, leading to the formation of acetoxydehydroaustin. The short chain dehydrogenase ausT catalyzes the reduction of the double bond present between carbon atoms 1 and 2 to convert 7-dehydrodehydroaustin into 1,2-dihydro-7-hydroxydehydroaustin. AusQ catalyzes not only an acetylation reaction but also the addition of the PKS ausV diketide product to 1,2-dihydro-7-hydroxydehydroaustin, forming precalidodehydroaustin. Finally, the iron/alpha-ketoglutarate-dependent dioxygenase converts precalidodehydroaustin into calidodehydroaustin. The protein is Short chain dehydrogenase ausX of Aspergillus calidoustus.